Reading from the N-terminus, the 141-residue chain is MMKFIALFALVAVASAGKMTFKDCGHGEVTELDITGCSGDTCVIHRGEKMTLEAKFAANQDTAKVTIKVLAKVAGTTIQVPGLETDGCKFIKCPVKKGEALDFIYSGTIPAITPKVKADVTAELIGDHGVMACGTVHGQVE.

Positions 1-16 are cleaved as a signal peptide; that stretch reads MMKFIALFALVAVASA. 3 cysteine pairs are disulfide-bonded: cysteine 24–cysteine 133, cysteine 37–cysteine 42, and cysteine 88–cysteine 93. A run of 3 repeats spans residues 64–65, 68–69, and 72–73. Positions 64–73 are 3 X 2 AA repeats of K-V; the sequence is KVTIKVLAKV.

The protein belongs to the NPC2 family. In terms of assembly, monomer.

It is found in the secreted. This Lepidoglyphus destructor (Storage mite) protein is Mite group 2 allergen Lep d 2.